A 35-amino-acid polypeptide reads, in one-letter code: Photosystem II reaction center protein Psb30 (35 aa).

A helical membrane pass occupies residues 7 to 27; sequence LIANFGALALITLAGPAVIFI.

Belongs to the Psb30/Ycf12 family. PSII is composed of 1 copy each of membrane proteins PsbA, PsbB, PsbC, PsbD, PsbE, PsbF, PsbH, PsbI, PsbJ, PsbK, PsbL, PsbM, PsbT, PsbX, PsbY, PsbZ, Psb30/Ycf12, peripheral proteins PsbO, CyanoQ (PsbQ), PsbU, PsbV and a large number of cofactors. It forms dimeric complexes.

The protein localises to the cellular thylakoid membrane. A core subunit of photosystem II (PSII), probably helps stabilize the reaction center. The sequence is that of Photosystem II reaction center protein Psb30 from Synechococcus sp. (strain CC9311).